We begin with the raw amino-acid sequence, 84 residues long: CDC42 small effector protein 2 (84 aa).

S-palmitoyl cysteine attachment occurs at residues cysteine 10 and cysteine 11. One can recognise a CRIB domain in the interval isoleucine 29–glycine 42. Phosphoserine is present on residues serine 43 and serine 52.

The protein belongs to the CDC42SE/SPEC family. As to quaternary structure, interacts with CDC42 (in GTP-bound form). Interacts weakly with RAC1 and not at all with RHOA.

The protein resides in the cytoplasm. Its subcellular location is the cytoskeleton. The protein localises to the cell membrane. It localises to the cell projection. It is found in the phagocytic cup. In terms of biological role, probably involved in the organization of the actin cytoskeleton by acting downstream of CDC42, inducing actin filament assembly. Alters CDC42-induced cell shape changes. In activated T-cells, may play a role in CDC42-mediated F-actin accumulation at the immunological synapse. May play a role in early contractile events in phagocytosis in macrophages. In Bos taurus (Bovine), this protein is CDC42 small effector protein 2 (CDC42SE2).